The sequence spans 198 residues: Transmembrane protein 17 (198 aa).

N13 and N23 each carry an N-linked (GlcNAc...) asparagine glycan. A run of 4 helical transmembrane segments spans residues 45–65, 78–98, 110–130, and 142–162; these read MSLY…IMML, FIVV…LYLG, LAGF…FLLF, and AVHI…FLTL.

The protein belongs to the TMEM17 family. As to quaternary structure, part of the tectonic-like complex (also named B9 complex).

The protein localises to the cell projection. It localises to the cilium membrane. Transmembrane component of the tectonic-like complex, a complex localized at the transition zone of primary cilia and acting as a barrier that prevents diffusion of transmembrane proteins between the cilia and plasma membranes. Required for ciliogenesis and sonic hedgehog/SHH signaling. In Bos taurus (Bovine), this protein is Transmembrane protein 17 (TMEM17).